The chain runs to 132 residues: Small ribosomal subunit protein uS8c (132 aa).

This sequence belongs to the universal ribosomal protein uS8 family. As to quaternary structure, part of the 30S ribosomal subunit.

The protein localises to the plastid. It localises to the chloroplast. In terms of biological role, one of the primary rRNA binding proteins, it binds directly to 16S rRNA central domain where it helps coordinate assembly of the platform of the 30S subunit. In Anthoceros angustus (Hornwort), this protein is Small ribosomal subunit protein uS8c (rps8).